We begin with the raw amino-acid sequence, 294 residues long: tRNA pseudouridine synthase B (294 aa).

Aspartate 39 acts as the Nucleophile in catalysis.

The protein belongs to the pseudouridine synthase TruB family. Type 1 subfamily.

It carries out the reaction uridine(55) in tRNA = pseudouridine(55) in tRNA. Functionally, responsible for synthesis of pseudouridine from uracil-55 in the psi GC loop of transfer RNAs. This is tRNA pseudouridine synthase B from Streptococcus agalactiae serotype Ia (strain ATCC 27591 / A909 / CDC SS700).